Reading from the N-terminus, the 200-residue chain is 3-isopropylmalate dehydratase small subunit (200 aa).

Belongs to the LeuD family. LeuD type 1 subfamily. As to quaternary structure, heterodimer of LeuC and LeuD.

The enzyme catalyses (2R,3S)-3-isopropylmalate = (2S)-2-isopropylmalate. The protein operates within amino-acid biosynthesis; L-leucine biosynthesis; L-leucine from 3-methyl-2-oxobutanoate: step 2/4. Its function is as follows. Catalyzes the isomerization between 2-isopropylmalate and 3-isopropylmalate, via the formation of 2-isopropylmaleate. The protein is 3-isopropylmalate dehydratase small subunit of Campylobacter jejuni (strain RM1221).